The primary structure comprises 425 residues: Metacaspase-1 (425 aa).

Residues 1 to 110 (MSYNSNPYNG…PQLPNTQTQS (110 aa)) form a disordered region. Over residues 13 to 28 (YPPYNTYTRPNYSPNN) the composition is skewed to low complexity. Polar residues-rich tracts occupy residues 29 to 38 (GSQSNNTVHQ) and 88 to 110 (TGAN…QTQS). Catalysis depends on residues H214 and C270.

It belongs to the peptidase C14B family.

The protein localises to the cytoplasm. The protein resides in the nucleus. In terms of biological role, involved in cell death (apoptosis). In Schizosaccharomyces pombe (strain 972 / ATCC 24843) (Fission yeast), this protein is Metacaspase-1 (pca1).